The sequence spans 310 residues: ADP-L-glycero-D-manno-heptose-6-epimerase (310 aa).

NADP(+) contacts are provided by residues Phe-10 to Ile-11, Asp-31 to Asn-32, Lys-38, Lys-53, Glu-75 to Ser-79, and Asn-92. Residue Tyr-140 is the Proton acceptor of the active site. Residue Lys-144 participates in NADP(+) binding. Residue Asn-169 coordinates substrate. NADP(+)-binding residues include Val-170 and Lys-178. The active-site Proton acceptor is the Lys-178. Residues Ser-180, His-187, Phe-201–Ser-204, Arg-209, and Tyr-272 contribute to the substrate site.

This sequence belongs to the NAD(P)-dependent epimerase/dehydratase family. HldD subfamily. Homopentamer. NADP(+) serves as cofactor.

The enzyme catalyses ADP-D-glycero-beta-D-manno-heptose = ADP-L-glycero-beta-D-manno-heptose. Its pathway is nucleotide-sugar biosynthesis; ADP-L-glycero-beta-D-manno-heptose biosynthesis; ADP-L-glycero-beta-D-manno-heptose from D-glycero-beta-D-manno-heptose 7-phosphate: step 4/4. The protein operates within bacterial outer membrane biogenesis; LPS core biosynthesis. Catalyzes the interconversion between ADP-D-glycero-beta-D-manno-heptose and ADP-L-glycero-beta-D-manno-heptose via an epimerization at carbon 6 of the heptose. The sequence is that of ADP-L-glycero-D-manno-heptose-6-epimerase from Klebsiella pneumoniae.